Reading from the N-terminus, the 59-residue chain is MAFDKKLLDIVACPVCKGKLEYDKTTQQLICKADKLAYPITDGIPVLLENRAVPLNEAV.

This sequence belongs to the UPF0434 family.

In Shewanella sp. (strain MR-7), this protein is UPF0434 protein Shewmr7_2490.